Here is a 580-residue protein sequence, read N- to C-terminus: NADH-ubiquinone oxidoreductase chain 5 (580 aa).

The next 16 membrane-spanning stretches (helical) occupy residues 12 to 32 (FYFL…FLLM), 50 to 70 (IVMT…VLLI), 92 to 112 (ILLV…PNLI), 113 to 133 (SILL…IYFQ), 153 to 173 (VALL…YIFY), 183 to 203 (MMII…QIPF), 215 to 235 (TPVS…YLLI), 244 to 264 (WWMA…AGLG), 274 to 293 (IIAL…LSMG), 298 to 320 (AFFH…GSII), 343 to 363 (CSCF…AGFY), 367 to 387 (LILE…LFFF), 427 to 447 (ICFL…LMFL), 463 to 483 (LFVC…KLFF), 496 to 516 (FVGS…NYPL), and 560 to 580 (IYLL…VLVN).

The protein belongs to the complex I subunit 5 family.

The protein resides in the mitochondrion inner membrane. The enzyme catalyses a ubiquinone + NADH + 5 H(+)(in) = a ubiquinol + NAD(+) + 4 H(+)(out). Functionally, core subunit of the mitochondrial membrane respiratory chain NADH dehydrogenase (Complex I) that is believed to belong to the minimal assembly required for catalysis. Complex I functions in the transfer of electrons from NADH to the respiratory chain. The immediate electron acceptor for the enzyme is believed to be ubiquinone. The sequence is that of NADH-ubiquinone oxidoreductase chain 5 (mt:ND5) from Anopheles gambiae (African malaria mosquito).